The sequence spans 178 residues: Interleukin-10 (178 aa).

Positions M1–A18 are cleaved as a signal peptide. Cystine bridges form between C30/C126 and C80/C132. The N-linked (GlcNAc...) asparagine glycan is linked to N134.

The protein belongs to the IL-10 family. As to quaternary structure, homodimer. Interacts with IL10RA and IL10RB.

The protein resides in the secreted. Major immune regulatory cytokine that acts on many cells of the immune system where it has profound anti-inflammatory functions, limiting excessive tissue disruption caused by inflammation. Mechanistically, IL10 binds to its heterotetrameric receptor comprising IL10RA and IL10RB leading to JAK1 and STAT2-mediated phosphorylation of STAT3. In turn, STAT3 translocates to the nucleus where it drives expression of anti-inflammatory mediators. Targets antigen-presenting cells (APCs) such as macrophages and monocytes and inhibits their release of pro-inflammatory cytokines including granulocyte-macrophage colony-stimulating factor /GM-CSF, granulocyte colony-stimulating factor/G-CSF, IL-1 alpha, IL-1 beta, IL-6, IL-8 and TNF-alpha. Also interferes with antigen presentation by reducing the expression of MHC-class II and co-stimulatory molecules, thereby inhibiting their ability to induce T cell activation. In addition, controls the inflammatory response of macrophages by reprogramming essential metabolic pathways including mTOR signaling. The polypeptide is Interleukin-10 (IL10) (Bos taurus (Bovine)).